A 198-amino-acid polypeptide reads, in one-letter code: Probable GTP-binding protein EngB (198 aa).

The 175-residue stretch at 21-195 (NIPEVCFVGR…YDALIRLLEV (175 aa)) folds into the EngB-type G domain. Residues 29 to 36 (GRSNVGKS), 56 to 60 (GKTRL), 75 to 78 (DAPG), 142 to 145 (TKLD), and 174 to 176 (VSN) each bind GTP. Residues S36 and T58 each coordinate Mg(2+).

This sequence belongs to the TRAFAC class TrmE-Era-EngA-EngB-Septin-like GTPase superfamily. EngB GTPase family. Mg(2+) is required as a cofactor.

Functionally, necessary for normal cell division and for the maintenance of normal septation. This is Probable GTP-binding protein EngB from Mesoplasma florum (strain ATCC 33453 / NBRC 100688 / NCTC 11704 / L1) (Acholeplasma florum).